The chain runs to 117 residues: Ig heavy chain V-A2 region K-25 (117 aa).

Q1 carries the post-translational modification Pyrrolidone carboxylic acid. The Ig-like domain occupies 1–106 (QSVKESEGGL…GLSYLKSSVD (106 aa)). A disulfide bridge connects residues C21 and C91.

The sequence is that of Ig heavy chain V-A2 region K-25 from Oryctolagus cuniculus (Rabbit).